We begin with the raw amino-acid sequence, 110 residues long: Large ribosomal subunit protein bL20 (110 aa).

Belongs to the bacterial ribosomal protein bL20 family.

Binds directly to 23S ribosomal RNA and is necessary for the in vitro assembly process of the 50S ribosomal subunit. It is not involved in the protein synthesizing functions of that subunit. The chain is Large ribosomal subunit protein bL20 from Shigella boydii serotype 4 (strain Sb227).